Reading from the N-terminus, the 72-residue chain is Translation initiation factor IF-1 (72 aa).

An S1-like domain is found at 1–72; sequence MAKEEVLEFP…TKGRITYRLK (72 aa).

The protein belongs to the IF-1 family. Component of the 30S ribosomal translation pre-initiation complex which assembles on the 30S ribosome in the order IF-2 and IF-3, IF-1 and N-formylmethionyl-tRNA(fMet); mRNA recruitment can occur at any time during PIC assembly.

Its subcellular location is the cytoplasm. One of the essential components for the initiation of protein synthesis. Stabilizes the binding of IF-2 and IF-3 on the 30S subunit to which N-formylmethionyl-tRNA(fMet) subsequently binds. Helps modulate mRNA selection, yielding the 30S pre-initiation complex (PIC). Upon addition of the 50S ribosomal subunit IF-1, IF-2 and IF-3 are released leaving the mature 70S translation initiation complex. The chain is Translation initiation factor IF-1 from Brucella suis biovar 1 (strain 1330).